A 232-amino-acid chain; its full sequence is Cilia- and flagella-associated protein 95 (232 aa).

Residues 1 to 96 (MDSSDSSCQE…PVWISETREK (96 aa)) lie on the Extracellular side of the membrane. Residue Asn-75 is glycosylated (N-linked (GlcNAc...) asparagine). A helical transmembrane segment spans residues 97-115 (MAQVCLNTKLAKIKSKALL). The Cytoplasmic portion of the chain corresponds to 116 to 232 (NEETMNSGII…TGGPIAPFLK (117 aa)). The tract at residues 153 to 163 (LTTYAEEYAPP) is mn.

In terms of assembly, microtubule inner protein component of sperm flagellar doublet microtubules. Interacts with MYH9. Interacts with MYH10. In terms of tissue distribution, expressed in trachea multiciliated cells.

It is found in the cytoplasm. Its subcellular location is the cytoskeleton. It localises to the cilium axoneme. The protein resides in the flagellum axoneme. The protein localises to the cell membrane. Microtubule inner protein (MIP) part of the dynein-decorated doublet microtubules (DMTs) in cilia axoneme, which is required for motile cilia beating. The sequence is that of Cilia- and flagella-associated protein 95 from Bos taurus (Bovine).